A 1378-amino-acid polypeptide reads, in one-letter code: DNA-directed RNA polymerase subunit beta (1378 aa).

This sequence belongs to the RNA polymerase beta chain family. The RNAP catalytic core consists of 2 alpha, 1 beta, 1 beta' and 1 omega subunit. When a sigma factor is associated with the core the holoenzyme is formed, which can initiate transcription.

It catalyses the reaction RNA(n) + a ribonucleoside 5'-triphosphate = RNA(n+1) + diphosphate. Its function is as follows. DNA-dependent RNA polymerase catalyzes the transcription of DNA into RNA using the four ribonucleoside triphosphates as substrates. This Ruegeria pomeroyi (strain ATCC 700808 / DSM 15171 / DSS-3) (Silicibacter pomeroyi) protein is DNA-directed RNA polymerase subunit beta.